Consider the following 118-residue polypeptide: Beta-2-microglobulin (118 aa).

An N-terminal signal peptide occupies residues 1–20; the sequence is MARVVALVLLGLLSLTGLEA. One can recognise an Ig-like C1-type domain in the interval 22-115; the sequence is PRVPKVQVYS…LKDPLIVKWD (94 aa). A disulfide bridge connects residues Cys45 and Cys99.

This sequence belongs to the beta-2-microglobulin family. In terms of assembly, heterodimer of an alpha chain and a beta chain. Beta-2-microglobulin is the beta-chain of major histocompatibility complex class I molecules.

Its subcellular location is the secreted. Component of the class I major histocompatibility complex (MHC). Involved in the presentation of peptide antigens to the immune system. The polypeptide is Beta-2-microglobulin (B2M) (Equus caballus (Horse)).